A 258-amino-acid chain; its full sequence is UPF0246 protein YaaA (258 aa).

Belongs to the UPF0246 family.

This chain is UPF0246 protein YaaA, found in Escherichia coli O45:K1 (strain S88 / ExPEC).